Here is a 329-residue protein sequence, read N- to C-terminus: DNA-directed RNA polymerase subunit alpha (329 aa).

The alpha N-terminal domain (alpha-NTD) stretch occupies residues 1–235 (MQGSVTEFLK…EQLEAFVDLR (235 aa)). An alpha C-terminal domain (alpha-CTD) region spans residues 249–329 (FDPILLRPVD…NWPPASIADE (81 aa)).

Belongs to the RNA polymerase alpha chain family. In terms of assembly, homodimer. The RNAP catalytic core consists of 2 alpha, 1 beta, 1 beta' and 1 omega subunit. When a sigma factor is associated with the core the holoenzyme is formed, which can initiate transcription.

It catalyses the reaction RNA(n) + a ribonucleoside 5'-triphosphate = RNA(n+1) + diphosphate. Functionally, DNA-dependent RNA polymerase catalyzes the transcription of DNA into RNA using the four ribonucleoside triphosphates as substrates. The protein is DNA-directed RNA polymerase subunit alpha of Enterobacter sp. (strain 638).